The sequence spans 604 residues: Glutamine--fructose-6-phosphate aminotransferase [isomerizing] (604 aa).

Cysteine 2 serves as the catalytic Nucleophile; for GATase activity. Positions 2–219 constitute a Glutamine amidotransferase type-2 domain; that stretch reads CGIMGAVSER…EGDSACVTTQ (218 aa). 2 consecutive SIS domains span residues 279–427 and 454–594; these read LRAS…DNRA and LASL…VDQP. Lysine 599 (for Fru-6P isomerization activity) is an active-site residue.

In terms of assembly, homodimer.

The protein localises to the cytoplasm. It carries out the reaction D-fructose 6-phosphate + L-glutamine = D-glucosamine 6-phosphate + L-glutamate. Catalyzes the first step in hexosamine metabolism, converting fructose-6P into glucosamine-6P using glutamine as a nitrogen source. The chain is Glutamine--fructose-6-phosphate aminotransferase [isomerizing] from Legionella pneumophila (strain Paris).